Consider the following 211-residue polypeptide: Nitrogen fixation regulation protein FixK (211 aa).

One can recognise an HTH crp-type domain in the interval Gln134 to Glu204. The segment at residues Arg163–Thr182 is a DNA-binding region (H-T-H motif).

FixK is a protein that regulates nitrogen fixation genes both positively and negatively. FixK appears to repress its own expression and that of nifA. FixK may bind DNA at the FNR consensus binding site. The chain is Nitrogen fixation regulation protein FixK (fixK) from Rhizobium meliloti (strain 1021) (Ensifer meliloti).